Consider the following 347-residue polypeptide: Putative phosphoesterase 078R (347 aa).

Asp52, Asn87, and His211 together coordinate a divalent metal cation.

Belongs to the metallophosphoesterase superfamily. IIV-6 244L family.

In Invertebrate iridescent virus 3 (IIV-3), this protein is Putative phosphoesterase 078R.